The primary structure comprises 5043 residues: Polyketide synthase PksJ (5043 aa).

Residues Ala-141–Thr-481 are adenylation 1. The Carrier 1 domain maps to Arg-590–Glu-667. At Ser-627 the chain carries O-(pantetheine 4'-phosphoryl)serine. Positions Gln-690 to Asn-989 are condensation. The adenylation 2 stretch occupies residues Thr-1181–Val-1578. The region spanning Thr-1654 to Arg-1729 is the Carrier 2 domain. Residue Ser-1689 is modified to O-(pantetheine 4'-phosphoryl)serine. Positions Asp-1760–Gln-2186 constitute a Ketosynthase family 3 (KS3) 1 domain. Catalysis depends on for beta-ketoacyl synthase 1 activity residues Cys-1932, His-2068, and His-2108. The tract at residues His-2374–Glu-2499 is N-terminal hotdog fold. A PKS/mFAS DH domain is found at His-2374–Thr-2661. His-2403 (proton acceptor; for dehydratase activity) is an active-site residue. The interval Gly-2513–Thr-2661 is C-terminal hotdog fold. Asp-2575 functions as the Proton donor; for dehydratase activity in the catalytic mechanism. Carrier domains are found at residues Arg-3114–Tyr-3188 and Ser-3212–His-3286. 2 positions are modified to O-(pantetheine 4'-phosphoryl)serine: Ser-3148 and Ser-3246. Residues Val-3291–Thr-3314 form a disordered region. The region spanning Phe-3339 to Glu-3779 is the Ketosynthase family 3 (KS3) 2 domain. Catalysis depends on for beta-ketoacyl synthase 2 activity residues Cys-3511, His-3646, and His-3695. Positions Arg-3839–Glu-3872 form a coiled coil. The Carrier 5 domain occupies Gly-4459–Tyr-4536. Ser-4496 is subject to O-(pantetheine 4'-phosphoryl)serine. Residues Ala-4588 to Ala-4992 form the Ketosynthase family 3 (KS3) 3 domain. Catalysis depends on Cys-4743, which acts as the For beta-ketoacyl synthase 3 activity.

This sequence belongs to the ATP-dependent AMP-binding enzyme family. It depends on pantetheine 4'-phosphate as a cofactor.

The protein resides in the cytoplasm. Its pathway is antibiotic biosynthesis; bacillaene biosynthesis. Involved in some intermediate steps for the synthesis of the antibiotic polyketide bacillaene which is involved in secondary metabolism. The protein is Polyketide synthase PksJ (pksJ) of Bacillus subtilis (strain 168).